We begin with the raw amino-acid sequence, 90 residues long: Probable acyl carrier protein (90 aa).

The Carrier domain maps to 9-90 (QVTVEELSAL…LVNGALKTGV (82 aa)). Position 47 is an O-(pantetheine 4'-phosphoryl)serine (Ser47).

Post-translationally, 4'-phosphopantetheine is transferred from CoA to a specific serine of the apo-ACP-like protein.

Involved in developmentally regulated synthesis of a compound biosynthetically related to polyketide antibiotics which is essential for spore color in Streptomyces coelicolor. In Streptomyces coelicolor (strain ATCC BAA-471 / A3(2) / M145), this protein is Probable acyl carrier protein.